A 1194-amino-acid chain; its full sequence is F-box only protein 38 (1194 aa).

An F-box domain is found at 30–75 (MNQLSHEVLCHIFRYLPLQDIMCMECLSRKLKEAVTLYLRVVRVVD). The interaction with KLF7 stretch occupies residues 59-119 (KLKEAVTLYL…LHPRYLERRR (61 aa)). 3 consecutive short sequence motifs (nuclear export signal) follow at residues 194-201 (LHLVGVNV), 307-316 (LEVDLGYLII), and 451-460 (LLPSLEFISL). Disordered stretches follow at residues 487 to 529 (ALVS…FRPD), 577 to 776 (EEQA…DAES), 793 to 879 (RTGR…RARS), and 896 to 915 (KPCH…STSD). Positions 493–510 (NSNNDNDNNAPNNNANLH) are enriched in low complexity. A Phosphothreonine modification is found at Thr592. A phosphoserine mark is found at Ser599, Ser601, and Ser607. Positions 599-609 (SESDDEEDSLE) are enriched in acidic residues. Basic and acidic residues-rich tracts occupy residues 622 to 631 (RYSEREEKTG) and 683 to 701 (IKAD…KSKD). Positions 705 to 728 (SCSSSSSSTAASTAGNASSPSTAS) are enriched in low complexity. A phosphoserine mark is found at Ser742 and Ser746. A compositionally biased stretch (acidic residues) spans 764 to 774 (EDSEAMEEGDA). The span at 793–804 (RTGRCSDEERPS) shows a compositional bias: basic and acidic residues. A compositionally biased stretch (polar residues) spans 855 to 867 (SSQPESCDVQSNE). The span at 896 to 906 (KPCHAMKRKRT) shows a compositional bias: basic residues. The Nuclear localization signal signature appears at 902 to 905 (KRKR).

As to quaternary structure, part of the SCF (SKP1-CUL1-F-box) E3 ubiquitin-protein ligase complex SCF(FBXO38) composed of CUL1, SKP1, RBX1 and FBXO38. Interacts with KLF7. Interacts with PDCD1/PD-1. Expressed at high levels in embryo (developing brain, spinal cord, branchial arms and limbs). Widely expressed at low levels in adult tissues, with highest expression in testis. Expressed in postmeiotic spermatids.

Its subcellular location is the cytoplasm. It is found in the cytosol. The protein resides in the nucleus. The protein operates within protein modification; protein ubiquitination. In terms of biological role, substrate recognition component of a SCF (SKP1-CUL1-F-box protein) E3 ubiquitin-protein ligase complex which mediates the ubiquitination and subsequent proteasomal degradation of PDCD1/PD-1, thereby regulating T-cells-mediated immunity. Required for anti-tumor activity of T-cells by promoting the degradation of PDCD1/PD-1; the PDCD1-mediated inhibitory pathway being exploited by tumors to attenuate anti-tumor immunity and facilitate tumor survival. May indirectly stimulate the activity of transcription factor KLF7, a regulator of neuronal differentiation, without promoting KLF7 ubiquitination. The chain is F-box only protein 38 from Mus musculus (Mouse).